The chain runs to 362 residues: PDZ and LIM domain protein 3 (362 aa).

The 84-residue stretch at 1–84 folds into the PDZ domain; the sequence is MPQNVVLPGP…QLCLKIDRAE (84 aa). A phosphoserine mark is found at Ser18, Ser92, and Ser263. Residues 261-282 form a disordered region; sequence DGSDDRPAGTRSVRPVTKVHGG. Residues 290–349 enclose the LIM zinc-binding domain; that stretch reads PLCDKCGSGIVGAVVKARDKYRHPECFVCADCNLNLKQKGYFFVEGELYCEMHARARTRP.

As to quaternary structure, interacts with ACTN2. Forms a heterodimer with PDLIM4 (via LIM domain). As to expression, highly expressed in skeletal muscle and at low levels in the heart.

It localises to the cytoplasm. The protein resides in the myofibril. The protein localises to the sarcomere. Its subcellular location is the z line. Functionally, may play a role in the organization of actin filament arrays within muscle cells. The polypeptide is PDZ and LIM domain protein 3 (Pdlim3) (Rattus norvegicus (Rat)).